A 319-amino-acid polypeptide reads, in one-letter code: Thiamine pyrophosphokinase (319 aa).

S2 is subject to N-acetylserine.

It belongs to the thiamine pyrophosphokinase family. As to quaternary structure, homodimer.

The catalysed reaction is thiamine + ATP = thiamine diphosphate + AMP + H(+). It functions in the pathway cofactor biosynthesis; thiamine diphosphate biosynthesis; thiamine diphosphate from thiamine: step 1/1. Its function is as follows. Essential protein, it is the only enzyme in yeast capable of synthesizing thiamine pyrophosphate (TPP). This chain is Thiamine pyrophosphokinase, found in Saccharomyces cerevisiae (strain ATCC 204508 / S288c) (Baker's yeast).